The primary structure comprises 425 residues: Meiotic recombination protein spo-11 (425 aa).

The tract at residues 1-38 (MYEYSFNPNIDHEPGSVESQQSTIYSDSDDSDDSFLDD) is disordered. The region spanning 15-158 (GSVESQQSTI…LNILSCGRGI (144 aa)) is the Topo IIA-type catalytic domain. A compositionally biased stretch (acidic residues) spans 27-38 (DSDDSDDSFLDD). Tyrosine 119 serves as the catalytic O-(5'-phospho-DNA)-tyrosine intermediate. The Mg(2+) site is built by glutamate 202 and aspartate 255.

It belongs to the TOP6A family. The cofactor is Mg(2+).

Its subcellular location is the nucleus. The catalysed reaction is ATP-dependent breakage, passage and rejoining of double-stranded DNA.. Required for meiotic recombination. Mediates DNA cleavage that forms the double-strand breaks (DSB) that initiate meiotic recombination. The protein is Meiotic recombination protein spo-11 (spo-11) of Caenorhabditis elegans.